The following is a 164-amino-acid chain: Phosphopantetheine adenylyltransferase (164 aa).

Residue S11 coordinates substrate. Residues 11–12 (SF) and H19 contribute to the ATP site. Substrate is bound by residues K43, A76, and R90. ATP-binding positions include 91-93 (GLR), E101, and 126-132 (YQHISSS).

It belongs to the bacterial CoaD family. As to quaternary structure, homohexamer. It depends on Mg(2+) as a cofactor.

The protein localises to the cytoplasm. The catalysed reaction is (R)-4'-phosphopantetheine + ATP + H(+) = 3'-dephospho-CoA + diphosphate. It functions in the pathway cofactor biosynthesis; coenzyme A biosynthesis; CoA from (R)-pantothenate: step 4/5. Its function is as follows. Reversibly transfers an adenylyl group from ATP to 4'-phosphopantetheine, yielding dephospho-CoA (dPCoA) and pyrophosphate. This Streptococcus sanguinis (strain SK36) protein is Phosphopantetheine adenylyltransferase.